Reading from the N-terminus, the 191-residue chain is Protein GrpE (191 aa).

This sequence belongs to the GrpE family. In terms of assembly, homodimer.

It localises to the cytoplasm. Functionally, participates actively in the response to hyperosmotic and heat shock by preventing the aggregation of stress-denatured proteins, in association with DnaK and GrpE. It is the nucleotide exchange factor for DnaK and may function as a thermosensor. Unfolded proteins bind initially to DnaJ; upon interaction with the DnaJ-bound protein, DnaK hydrolyzes its bound ATP, resulting in the formation of a stable complex. GrpE releases ADP from DnaK; ATP binding to DnaK triggers the release of the substrate protein, thus completing the reaction cycle. Several rounds of ATP-dependent interactions between DnaJ, DnaK and GrpE are required for fully efficient folding. This is Protein GrpE from Nitratidesulfovibrio vulgaris (strain ATCC 29579 / DSM 644 / CCUG 34227 / NCIMB 8303 / VKM B-1760 / Hildenborough) (Desulfovibrio vulgaris).